Reading from the N-terminus, the 2016-residue chain is MNMPNERLKWLMLFAAVALIACGSQTLAANPPDADQKGPVFLKEPTNRIDFSNSTGAEIECKASGNPMPEIIWIRSDGTAVGDVPGLRQISSDGKLVFPPFRAEDYRQEVHAQVYACLARNQFGSIISRDVHVRAVVAQYYEADVNKEHVIRGNSAVIKCLIPSFVADFVEVVSWHTDEEENYFPGAEYDGKYLVLPSGELHIREVGPEDGYKSYQCRTKHRLTGETRLSATKGRLVITEPVSSSPPKINALTYKPNIVESMASTAILCPAQGYPAPSFRWYKFIEGTTRKQAVVLNDRVKQVSGTLIIKDAVVEDSGKYLCVVNNSVGGESVETVLTVTAPLSAKIDPPTQTVDFGRPAVFTCQYTGNPIKTVSWMKDGKAIGHSEPVLRIESVKKEDKGMYQCFVRNDQESAEASAELKLGGRFDPPVIRQAFQEETMEPGPSVFLKCVAGGNPTPEISWELDGKKIANNDRYQVGQYVTVNGDVVSYLNITSVHANDGGLYKCIAKSKVGVAEHSAKLNVYGLPYIRQMEKKAIVAGETLIVTCPVAGYPIDSIVWERDNRALPINRKQKVFPNGTLIIENVERNSDQATYTCVAKNQEGYSARGSLEVQVMVPPQVLPFSFGESAADVGDIASANCVVPKGDLPLEIRWSLNSAPIVNGENGFTLVRLNKRTSLLNIDSLNAFHRGVYKCIATNPAGTSEYVAELQVNVPPRWILEPTDKAFAQGSDAKVECKADGFPKPQVTWKKAVGDTPGEYKDLKKSDNIRVEEGTLHVDNIQKTNEGYYLCEAINGIGSGLSAVIMISVQAPPEFTEKLRNQTARRGEPAVLQCEAKGEKPIGILWNMNNMRLDPKNDNRYTIREEILSTGVMSSLSIKRTERSDSALFTCVATNAFGSDDASINMIVQEVPEMPYALKVLDKSGRSVQLSWAQPYDGNSPLDRYIIEFKRSRASWSEIDRVIVPGHTTEAQVQKLSPATTYNIRIVAENAIGTSQSSEAVTIITAEEAPSGKPQNIKVEPVNQTTMRVTWKPPPRTEWNGEILGYYVGYKLSNTNSSYVFETINFITEEGKEHNLELQNLRVYTQYSVVIQAFNKIGAGPLSEEEKQFTAEGTPSQPPSDTACTTLTSQTIRVGWVSPPLESANGVIKTYKVVYAPSDEWYDETKRHYKKTASSDTVLHGLKKYTNYTMQVLATTAGGDGVRSVPIHCQTEPDVPEAPTDVKALVMGNAAILVSWRPPAQPNGIITQYTVYSKAEGAETETKTQKVPHYQMSFEATELEKNKPYEFWVTASTTIGEGQQSKSIVAMPSDQVPAKIASFDDTFTATFKEDAKMPCLAVGAPQPEITWKIKGVEFSANDRMRVLPDGSLLIKSVNRQDAGDYSCHAENSIAKDSITHKLIVLAPPQSPHVTLSATTTDALTVKLKPHEGDTAPLHGYTLHYKPEFGEWETSEVSVDSQKHNIEGLLCGSRYQVYATGFNNIGAGEASDILNTRTKGQKPKLPEKPRFIEVSSNSVSLHFKAWKDGGCPMSHFVVESKKRDQIEWNQISNNVKPDNNYVVLDLEPATWYNLRITAHNSAGFTVAEYDFATLTVTGGTIAPSRDLPELSAEDTIRIILSNLNLVVPVVAALLVIIIAIIVICILRSKGNHHKDDVVYNQTMGPGATLDKRRPDLRDELGYIAPPNRKLPPVPGSNYNTCDRIKRGRGGLRSNHSTWDPRRNPNLYEELKAPPVPMHGNHYGHAHGNAECHYRHPGMEDEICPYATFHLLGFREEMDPTKAMNFQTFPHQNGHAGPVPGHAGTMLPPGHPGHVHSRSGSQSMPRANRYQRKNSQGGQSSIYTPAPEYDDPANCAEEDQYRRYTRVNSQGGSLYSGPGPEYDDPANCAPEEDQYGSQYGGPYGQPYDHYGSRGSMGRRSIGSARNPGNGSPEPPPPPPRNHDMSNSSFNDSKESNEISEAECDRDHGPRGNYGAVKRSPQPKDQRTTEEMRKLIERNETGPKQLQLQQANGAGFTAYDTMAV.

The N-terminal stretch at 1 to 28 is a signal peptide; sequence MNMPNERLKWLMLFAAVALIACGSQTLA. The Extracellular portion of the chain corresponds to 29 to 1618; it reads ANPPDADQKG…TIRIILSNLN (1590 aa). Ig-like C2-type domains lie at 39–134, 138–230, 247–338, 342–421, 428–522, 527–613, 618–712, 715–807, and 812–904; these read PVFL…VHVR, AQYY…TRLS, PKIN…TVLT, PLSA…AELK, PPVI…AKLN, PYIR…LEVQ, PQVL…LQVN, PRWI…IMIS, and PEFT…ASIN. Asn53 carries an N-linked (GlcNAc...) asparagine glycan. Residues Cys61 and Cys117 are joined by a disulfide bond. Asp144, Asn146, and Leu161 together coordinate Zn(2+). 13 cysteine pairs are disulfide-bonded: Cys160/Cys217, Cys160/Thr219, Cys160/Lys220, Cys269/Cys322, Pro270/Val323, Ala276/Gly329, Cys364/Cys405, Cys450/Cys506, Cys547/Cys596, Cys640/Cys694, Val641/Cys694, Val641/Ile695, and Cys736/Cys790. N-linked (GlcNAc...) asparagine glycosylation occurs at Asn325. N-linked (GlcNAc...) asparagine glycosylation is found at Asn492 and Asn577. Asn820 is a glycosylation site (N-linked (GlcNAc...) asparagine). A disulfide bridge links Cys833 with Cys890. Fibronectin type-III domains are found at residues 913–1007, 1012–1116, 1117–1213, and 1217–1310; these read MPYA…TAEE, KPQN…TPSQ, PPSD…TEPD, and APTD…PSDQ. 3 N-linked (GlcNAc...) asparagine glycosylation sites follow: Asn1022, Asn1055, and Asn1186. The 83-residue stretch at 1312-1394 folds into the Ig-like C2-type 10 domain; it reads PAKIASFDDT…ENSIAKDSIT (83 aa). Residues Cys1334 and Cys1382 are joined by a disulfide bond. Fibronectin type-III domains lie at 1402 to 1495 and 1499 to 1594; these read PPQS…TKGQ and LPEK…TGGT. Residues 1619 to 1639 form a helical membrane-spanning segment; that stretch reads LVVPVVAALLVIIIAIIVICI. Residues 1640 to 2016 lie on the Cytoplasmic side of the membrane; that stretch reads LRSKGNHHKD…GFTAYDTMAV (377 aa). The PXXP motif 1; SH3-binding motif lies at 1685–1688; sequence PPVP. A disordered region spans residues 1688 to 1719; sequence PGSNYNTCDRIKRGRGGLRSNHSTWDPRRNPN. Residues 1727 to 1730 carry the PXXP motif 2; SH3-binding motif; it reads PPVP. Disordered regions lie at residues 1787–1846 and 1862–2016; these read GHAG…DDPA and SQGG…TMAV. Over residues 1826 to 1836 the composition is skewed to polar residues; that stretch reads KNSQGGQSSIY. A YXXP motif 1; potential SH2-binding motif is present at residues 1842–1845; that stretch reads YDDP. The short motif at 1875 to 1878 is the YXXP motif 2; potential SH2-binding element; the sequence is YDDP. Positions 1897-1918 are enriched in low complexity; it reads GQPYDHYGSRGSMGRRSIGSAR. The short motif at 1925–1932 is the Polyproline tract (probable SH3-binding) element; sequence PEPPPPPP. Composition is skewed to basic and acidic residues over residues 1944–1962 and 1974–1993; these read DSKE…DHGP and QPKD…RNET. Residues 1994-2004 are compositionally biased toward polar residues; it reads GPKQLQLQQAN.

Homodimer (via extracellular region); alternative splicing produces a potential 19,008 different ectodomains and the majority of these show strong isoform-specific homodimerization. Interacts (via cytoplasmic domain) with dock/dreadlocks (via SH2 and SH3 domains); the interaction is direct and may require Dscam1 to be phosphorylated. Post-translationally, phosphorylated on tyrosine residues in the intracellular domain. Tyrosine protein kinase Src42A and possibly Src64B are involved in this phosphorylation. Glycosylation on Asn-53 and Asn-325 is involved in stabilizing dimerization. In terms of processing, proteolytically processed, probably to generate a secreted form. Secreted into the hemolymph (at protein level). Expressed in brain and eye-antennal imaginal disks, including R3/R4 and R7 photoreceptor cells. Individual R3/R4 cells express between 14 and 50 randomly generated mRNAs encoding distinct isoforms.

The protein resides in the cell membrane. Its subcellular location is the cell projection. It is found in the neuron projection. The protein localises to the axon. It localises to the perikaryon. The protein resides in the dendrite. Its subcellular location is the secreted. Cell surface receptor involved in guidance and targeting of growing nerve axons. Required during Bolwig's organ differentiation for accurate and efficient targeting of photoreceptor neuron axons to their synaptic targets in the brain via the P2 intermediate target neuron. Involved in isoneural self-avoidance during dendrite arborization but not in heteroneural recognition and repulsion during tiling by related neurons of the same class. Involved in regulating axon bifurcation and divergent extension in the developing mushroom body. Essential for axon arborisation in ellipsoid body. Exhibits an extraordinary level of molecular diversity resulting from alternative splicing. Isoforms differing in their ectodomain makeup show a high degree of functional redundancy while isoforms with different transmembrane domains are involved in different neuronal morphogenetic processes and are differentially targeted to dendrites or axons. The vast majority of isoforms exhibit strong isoform-specific homophilic binding. Individual cells express a distinct randomly generated repertoire of isoforms. Cell surfaces bearing identical repertoires of Dscam1 isoforms, such as those from the same cell, trigger recognition and avoidance. A subset of isoforms is expressed in fat body cells and hemocytes, cells that are part of the insect immune response, and these isoforms are secreted into the hemolymph. The secreted form comprising the ectodomain can bind to bacteria, such as Escherichia coli, and may act as an opsonin enhancing their phagocytosis by hemocytes. The chain is Cell adhesion molecule Dscam1 from Drosophila melanogaster (Fruit fly).